The following is a 406-amino-acid chain: Phosphopentomutase (406 aa).

Mn(2+)-binding residues include Asp-10, Asp-305, His-310, Asp-346, His-347, and His-358.

This sequence belongs to the phosphopentomutase family. It depends on Mn(2+) as a cofactor.

The protein resides in the cytoplasm. It catalyses the reaction 2-deoxy-alpha-D-ribose 1-phosphate = 2-deoxy-D-ribose 5-phosphate. It carries out the reaction alpha-D-ribose 1-phosphate = D-ribose 5-phosphate. The protein operates within carbohydrate degradation; 2-deoxy-D-ribose 1-phosphate degradation; D-glyceraldehyde 3-phosphate and acetaldehyde from 2-deoxy-alpha-D-ribose 1-phosphate: step 1/2. Functionally, isomerase that catalyzes the conversion of deoxy-ribose 1-phosphate (dRib-1-P) and ribose 1-phosphate (Rib-1-P) to deoxy-ribose 5-phosphate (dRib-5-P) and ribose 5-phosphate (Rib-5-P), respectively. This chain is Phosphopentomutase, found in Vibrio campbellii (strain ATCC BAA-1116).